Reading from the N-terminus, the 378-residue chain is Histidine decarboxylase (378 aa).

H120 is a substrate binding site. K233 is modified (N6-(pyridoxal phosphate)lysine).

The protein belongs to the group II decarboxylase family. As to quaternary structure, homotetramer. It depends on pyridoxal 5'-phosphate as a cofactor.

The catalysed reaction is L-histidine + H(+) = histamine + CO2. The sequence is that of Histidine decarboxylase (hdc) from Klebsiella aerogenes (Enterobacter aerogenes).